The primary structure comprises 232 residues: Enterobactin synthase component D (232 aa).

D106, E108, and E150 together coordinate Mg(2+).

It belongs to the P-Pant transferase superfamily. EntD family. In terms of assembly, entB, EntD, EntE, and EntF form a multienzyme complex called enterobactin synthase. It depends on Mg(2+) as a cofactor.

It localises to the membrane. It carries out the reaction apo-[aryl-carrier protein] + CoA = holo-[aryl-carrier protein] + adenosine 3',5'-bisphosphate + H(+). The enzyme catalyses apo-[peptidyl-carrier protein] + CoA = holo-[peptidyl-carrier protein] + adenosine 3',5'-bisphosphate + H(+). The protein operates within siderophore biosynthesis; enterobactin biosynthesis. Functionally, involved in the biosynthesis of the siderophore enterobactin (enterochelin), which is a macrocyclic trimeric lactone of N-(2,3-dihydroxybenzoyl)-serine. The serine trilactone serves as a scaffolding for the three catechol functionalities that provide hexadentate coordination for the tightly ligated iron(2+) atoms. Plays an essential role in the assembly of the enterobactin by catalyzing the transfer of the 4'-phosphopantetheine (Ppant) moiety from coenzyme A to the apo-domains of both EntB (ArCP domain) and EntF (PCP domain) to yield their holo-forms which make them competent for the activation of 2,3-dihydroxybenzoate (DHB) and L-serine, respectively. This is Enterobactin synthase component D from Salmonella austin.